A 428-amino-acid chain; its full sequence is Leucine-rich repeat-containing protein 42 (428 aa).

LRR repeat units follow at residues 149 to 170 (VLCS…EEIK), 174 to 195 (ELTC…LEHL), 202 to 222 (SVTQ…RKMT), 234 to 255 (NLSL…GYLF), and 259 to 280 (KLNC…KHKL). The interval 379-412 (KHEALSSQESKKSKKRAFEEPEKEQGSSSQTSKQ) is disordered. Residues 394 to 403 (RAFEEPEKEQ) show a composition bias toward basic and acidic residues. A phosphoserine mark is found at Ser406 and Ser407.

Belongs to the LRRC42 family.

This Bos taurus (Bovine) protein is Leucine-rich repeat-containing protein 42 (LRRC42).